A 197-amino-acid chain; its full sequence is MEVSMDLIKKLREMTGAGVLDCKKALEESEGDIEKAVEILRKKGAATAEKKAGRATKEGIIVAYVHFNGRIGVLLEMNCETDFVARTDEFKELAYNLAKQVAAMKPRYVRREDVPEEVIEKEKEIYRAQIKDKPEHVIEKIVEGKLEKFFEQACLYEQTYIFDDSKKVKDLINELIAKTGENIRVSRFTRYEVGEEG.

The interval 81–84 is involved in Mg(2+) ion dislocation from EF-Tu; that stretch reads TDFV.

The protein belongs to the EF-Ts family.

It localises to the cytoplasm. Functionally, associates with the EF-Tu.GDP complex and induces the exchange of GDP to GTP. It remains bound to the aminoacyl-tRNA.EF-Tu.GTP complex up to the GTP hydrolysis stage on the ribosome. This is Elongation factor Ts from Thermotoga neapolitana (strain ATCC 49049 / DSM 4359 / NBRC 107923 / NS-E).